We begin with the raw amino-acid sequence, 415 residues long: Multidrug resistance protein MdtA (415 aa).

The signal sequence occupies residues 1-21 (MKGSYKSRWVIVIVVVIAAIA). A compositionally biased stretch (polar residues) spans 31-46 (DSQSAAPGATKQAQQS). 2 disordered regions span residues 31-56 (DSQS…GMRA) and 391-415 (VEAQ…GARS). Residues 399 to 415 (PEEKATSREYAKKGARS) show a composition bias toward basic and acidic residues.

Belongs to the membrane fusion protein (MFP) (TC 8.A.1) family. Part of a tripartite efflux system composed of MdtA, MdtB and MdtC.

The protein localises to the cell inner membrane. In terms of biological role, the MdtABC tripartite complex confers resistance against novobiocin and deoxycholate. The chain is Multidrug resistance protein MdtA from Escherichia coli O45:K1 (strain S88 / ExPEC).